The following is a 472-amino-acid chain: Collagenase 3 (472 aa).

An N-terminal signal peptide occupies residues 1-19 (MHPGVLAAFLFLSWTRCWS). The propeptide at 20–104 (LPVPNDDDDD…PRCGVPDVGE (85 aa)) is activation peptide. The Cysteine switch motif lies at 95–102 (PRCGVPDV). Zn(2+) is bound at residue Cys-97. Asn-118 carries an N-linked (GlcNAc...) asparagine glycan. Asp-129 serves as a coordination point for Ca(2+). Residues Asn-153 and Asn-159 are each glycosylated (N-linked (GlcNAc...) asparagine). Asp-163 is a binding site for Ca(2+). Zn(2+) is bound by residues His-173 and Asp-175. The interaction with TIMP2 stretch occupies residues 177-247 (YPFDGPSGLL…GALMFPIYTY (71 aa)). The Ca(2+) site is built by Asp-180, Gly-181, Ser-183, and Leu-185. Zn(2+) is bound at residue His-188. Ca(2+) contacts are provided by Asn-195, Gly-197, and Asp-199. His-201 serves as a coordination point for Zn(2+). The Ca(2+) site is built by Asp-203, Asp-204, and Glu-206. His-223 provides a ligand contact to Zn(2+). The active site involves Glu-224. Positions 227, 233, and 241 each coordinate Zn(2+). An interaction with collagen region spans residues 269-472 (PGDEDPNPKH…VMPTNSLLWC (204 aa)). 4 Hemopexin repeats span residues 282-331 (PDKC…WPEL), 332-378 (PNRI…GFPK), 380-428 (VKKI…FPGI), and 429-472 (GDKV…LLWC). Cys-285 and Cys-472 form a disulfide bridge. The Ca(2+) site is built by Asp-292, Ile-294, Asp-336, and Ala-338. A Phosphotyrosine; by PKDCC modification is found at Tyr-367. Positions 384, 386, 433, and 435 each coordinate Ca(2+).

The protein belongs to the peptidase M10A family. It depends on Ca(2+) as a cofactor. Zn(2+) is required as a cofactor. Post-translationally, the proenzyme is activated by removal of the propeptide; this cleavage can be effected by other matrix metalloproteinases, such as MMP2, MMP3 and MMP14 and may involve several cleavage steps. Cleavage can also be autocatalytic, after partial maturation by another protease or after treatment with 4-aminophenylmercuric acetate (APMA) (in vitro). In terms of processing, N-glycosylated. Tyrosine phosphorylated by PKDCC/VLK. As to expression, seems to be specific to breast carcinomas.

It localises to the secreted. Its subcellular location is the extracellular space. The protein localises to the extracellular matrix. Functionally, plays a role in the degradation of extracellular matrix proteins including fibrillar collagen, fibronectin, TNC and ACAN. Cleaves triple helical collagens, including type I, type II and type III collagen, but has the highest activity with soluble type II collagen. Can also degrade collagen type IV, type XIV and type X. May also function by activating or degrading key regulatory proteins, such as TGFB1 and CCN2. Plays a role in wound healing, tissue remodeling, cartilage degradation, bone development, bone mineralization and ossification. Required for normal embryonic bone development and ossification. Plays a role in the healing of bone fractures via endochondral ossification. Plays a role in wound healing, probably by a mechanism that involves proteolytic activation of TGFB1 and degradation of CCN2. Plays a role in keratinocyte migration during wound healing. May play a role in cell migration and in tumor cell invasion. The sequence is that of Collagenase 3 (MMP13) from Equus caballus (Horse).